Reading from the N-terminus, the 144-residue chain is Hemoglobin embryonic subunit alpha (144 aa).

One can recognise a Globin domain in the interval 3 to 144 (SLSAKDKDVV…LALALAEKYR (142 aa)). His61 serves as a coordination point for O2. A heme b-binding site is contributed by His90.

This sequence belongs to the globin family. Heterotetramer of two alpha chains and two beta chains. In terms of tissue distribution, red blood cells.

Its function is as follows. Involved in oxygen transport from gills to the various peripheral tissues. The sequence is that of Hemoglobin embryonic subunit alpha from Oryzias latipes (Japanese rice fish).